Consider the following 147-residue polypeptide: Hemoglobin subunit beta (147 aa).

In terms of domain architecture, Globin spans 3–147 (LLSAEENAHV…VANALAHKYH (145 aa)). T13 bears the Phosphothreonine mark. S45 is modified (phosphoserine). At K60 the chain carries N6-acetyllysine. A heme b-binding site is contributed by H64. N6-acetyllysine is present on K83. H93 provides a ligand contact to heme b. The residue at position 94 (C94) is an S-nitrosocysteine. K145 is modified (N6-acetyllysine).

This sequence belongs to the globin family. Heterotetramer of two alpha chains and two beta chains. Red blood cells.

Functionally, involved in oxygen transport from the lung to the various peripheral tissues. The sequence is that of Hemoglobin subunit beta (HBB) from Eulemur fulvus fulvus (Brown lemur).